Reading from the N-terminus, the 253-residue chain is Ribonuclease PH (253 aa).

Phosphate-binding positions include Arg-86 and 124 to 126 (GTR).

The protein belongs to the RNase PH family. As to quaternary structure, homohexameric ring arranged as a trimer of dimers.

It catalyses the reaction tRNA(n+1) + phosphate = tRNA(n) + a ribonucleoside 5'-diphosphate. In terms of biological role, phosphorolytic 3'-5' exoribonuclease that plays an important role in tRNA 3'-end maturation. Removes nucleotide residues following the 3'-CCA terminus of tRNAs; can also add nucleotides to the ends of RNA molecules by using nucleoside diphosphates as substrates, but this may not be physiologically important. Probably plays a role in initiation of 16S rRNA degradation (leading to ribosome degradation) during starvation. The protein is Ribonuclease PH of Brevibacillus brevis (strain 47 / JCM 6285 / NBRC 100599).